The primary structure comprises 384 residues: Zinc finger protein GLIS2 homolog (384 aa).

The C2H2-type 1 zinc finger occupies 128-153 (FVCNWTDCDRVFDTLDALAQHVTQRH). Residues 163–190 (YYCRWRGCQRSERGFNARYKMLVHTRTH) form a C2H2-type 2; degenerate zinc finger. 3 C2H2-type zinc fingers span residues 196-218 (HRCH…IRSH), 224-248 (YKCS…TRTH), and 254-280 (YMCK…TFKH). Residues 321 to 343 (SSSSARYYDDSNNEPSDYSLKPK) are disordered.

The protein belongs to the GLI C2H2-type zinc-finger protein family.

It is found in the nucleus. Functionally, transcription factor which represses a set of lipase genes involved in fat catabolism. The polypeptide is Zinc finger protein GLIS2 homolog (sug) (Drosophila melanogaster (Fruit fly)).